Here is a 173-residue protein sequence, read N- to C-terminus: Crossover junction endodeoxyribonuclease RuvC (173 aa).

Residues D8, E67, and D139 contribute to the active site. Mg(2+) contacts are provided by D8, E67, and D139.

It belongs to the RuvC family. As to quaternary structure, homodimer which binds Holliday junction (HJ) DNA. The HJ becomes 2-fold symmetrical on binding to RuvC with unstacked arms; it has a different conformation from HJ DNA in complex with RuvA. In the full resolvosome a probable DNA-RuvA(4)-RuvB(12)-RuvC(2) complex forms which resolves the HJ. Mg(2+) is required as a cofactor.

It localises to the cytoplasm. It catalyses the reaction Endonucleolytic cleavage at a junction such as a reciprocal single-stranded crossover between two homologous DNA duplexes (Holliday junction).. Its function is as follows. The RuvA-RuvB-RuvC complex processes Holliday junction (HJ) DNA during genetic recombination and DNA repair. Endonuclease that resolves HJ intermediates. Cleaves cruciform DNA by making single-stranded nicks across the HJ at symmetrical positions within the homologous arms, yielding a 5'-phosphate and a 3'-hydroxyl group; requires a central core of homology in the junction. The consensus cleavage sequence is 5'-(A/T)TT(C/G)-3'. Cleavage occurs on the 3'-side of the TT dinucleotide at the point of strand exchange. HJ branch migration catalyzed by RuvA-RuvB allows RuvC to scan DNA until it finds its consensus sequence, where it cleaves and resolves the cruciform DNA. The polypeptide is Crossover junction endodeoxyribonuclease RuvC (Pectobacterium carotovorum subsp. carotovorum (strain PC1)).